The primary structure comprises 57 residues: Large ribosomal subunit protein bL32 (57 aa).

This sequence belongs to the bacterial ribosomal protein bL32 family.

This chain is Large ribosomal subunit protein bL32, found in Streptomyces griseus subsp. griseus (strain JCM 4626 / CBS 651.72 / NBRC 13350 / KCC S-0626 / ISP 5235).